Consider the following 404-residue polypeptide: Nicotinate phosphoribosyltransferase (404 aa).

Histidine 225 is modified (phosphohistidine; by autocatalysis).

It belongs to the NAPRTase family. Transiently phosphorylated on a His residue during the reaction cycle. Phosphorylation strongly increases the affinity for substrates and increases the rate of nicotinate D-ribonucleotide production. Dephosphorylation regenerates the low-affinity form of the enzyme, leading to product release.

The enzyme catalyses nicotinate + 5-phospho-alpha-D-ribose 1-diphosphate + ATP + H2O = nicotinate beta-D-ribonucleotide + ADP + phosphate + diphosphate. It functions in the pathway cofactor biosynthesis; NAD(+) biosynthesis; nicotinate D-ribonucleotide from nicotinate: step 1/1. Catalyzes the synthesis of beta-nicotinate D-ribonucleotide from nicotinate and 5-phospho-D-ribose 1-phosphate at the expense of ATP. The protein is Nicotinate phosphoribosyltransferase of Acinetobacter baumannii (strain ATCC 17978 / DSM 105126 / CIP 53.77 / LMG 1025 / NCDC KC755 / 5377).